The following is a 456-amino-acid chain: Putative E3 ubiquitin-protein ligase XBAT31 (456 aa).

5 ANK repeats span residues 45–74, 78–107, 112–141, 157–186, and 194–224; these read DRHS…NPDL, HKQT…NILM, NRRT…SSPV, KGAT…LVCA, and PGST…RLQR. The RING-type zinc-finger motif lies at 319–368; the sequence is CCICFEQVCTIEVKDCGHQMCAQCTLALCCHNKPNPTTSTVTPPVCPFCR.

It catalyses the reaction S-ubiquitinyl-[E2 ubiquitin-conjugating enzyme]-L-cysteine + [acceptor protein]-L-lysine = [E2 ubiquitin-conjugating enzyme]-L-cysteine + N(6)-ubiquitinyl-[acceptor protein]-L-lysine.. Its pathway is protein modification; protein ubiquitination. In terms of biological role, no E3 ubiquitin-protein ligase activity observed when associated with the E2 enzyme UBC8 in vitro. This is Putative E3 ubiquitin-protein ligase XBAT31 (XBAT31) from Arabidopsis thaliana (Mouse-ear cress).